The primary structure comprises 101 residues: uncharacterized protein (101 aa).

An N-terminal signal peptide occupies residues 1 to 21 (MKLSTCCAALLLALASPAVLA). Residues 79-94 (RTTSGNVSAPAQSSQD) show a composition bias toward polar residues. The segment at 79 to 101 (RTTSGNVSAPAQSSQDGAPAEPQ) is disordered.

This is an uncharacterized protein from Escherichia coli (strain K12).